The sequence spans 477 residues: GH30 family xylanase (477 aa).

Positions 1–19 are cleaved as a signal peptide; the sequence is MYSLLIALLCAGTAVDAQA. Residues asparagine 194, asparagine 237, and asparagine 331 are each glycosylated (N-linked (GlcNAc...) asparagine).

Belongs to the glycosyl hydrolase 30 family.

The protein resides in the secreted. Its activity is regulated as follows. Activity is enhanced by 10 mM Co(2+), Cu 2(2+) and Mn(2+) to levels as high as 44%. Partial inhibition of activity from 5 to 15% is observed in the presence of the following compouinds at a centration of 10 mM (from higher inhibition to lower): EDTA &gt; Mg(2+) &gt; urea, Zn(2+) &gt; Fe(3+). In terms of biological role, xylanase exhibiting endo- and exo-xylanase activity. Shows the highest activity toward beechwood glucuronoxylan, which consists of a beta-1,4-linked xylose backbone decorated with the methylated form of D-glucuronic acid (MeGlcA) attached directly to the main chain at xylose C2. Also acts against wheat arabinoxylan, a xylan without MeGlcA substituents along the main chain, but the xylanase activity is about two orders of magnitude lower than that achieved in the case of beechwood xylan. Shows no activity against carob galactomannan, konjac glucomannan, or barley beta-glucan. The recombinant xylanase also exhibits an exo-activity by releasing processively disaccharide units from the non-reducing end of linear and decorated xylooligosaccharides (XOS). The sequence is that of GH30 family xylanase from Thermothelomyces thermophilus (strain ATCC 42464 / BCRC 31852 / DSM 1799) (Sporotrichum thermophile).